The primary structure comprises 255 residues: Hydroxyacylglutathione hydrolase (255 aa).

Zn(2+) contacts are provided by histidine 56, histidine 58, aspartate 60, histidine 61, histidine 114, aspartate 133, and histidine 171.

The protein belongs to the metallo-beta-lactamase superfamily. Glyoxalase II family. Monomer. It depends on Zn(2+) as a cofactor.

The enzyme catalyses an S-(2-hydroxyacyl)glutathione + H2O = a 2-hydroxy carboxylate + glutathione + H(+). Its pathway is secondary metabolite metabolism; methylglyoxal degradation; (R)-lactate from methylglyoxal: step 2/2. In terms of biological role, thiolesterase that catalyzes the hydrolysis of S-D-lactoyl-glutathione to form glutathione and D-lactic acid. This is Hydroxyacylglutathione hydrolase from Ruegeria pomeroyi (strain ATCC 700808 / DSM 15171 / DSS-3) (Silicibacter pomeroyi).